Here is a 145-residue protein sequence, read N- to C-terminus: Prefoldin subunit alpha (145 aa).

This sequence belongs to the prefoldin alpha subunit family. Heterohexamer of two alpha and four beta subunits.

The protein localises to the cytoplasm. Its function is as follows. Molecular chaperone capable of stabilizing a range of proteins. Seems to fulfill an ATP-independent, HSP70-like function in archaeal de novo protein folding. The polypeptide is Prefoldin subunit alpha (Nitrosopumilus maritimus (strain SCM1)).